The chain runs to 437 residues: Trigger factor (437 aa).

The PPIase FKBP-type domain maps to 161–246; that stretch reads GDRVNIDFKG…VNKVEGKALP (86 aa).

Belongs to the FKBP-type PPIase family. Tig subfamily.

The protein resides in the cytoplasm. It carries out the reaction [protein]-peptidylproline (omega=180) = [protein]-peptidylproline (omega=0). Involved in protein export. Acts as a chaperone by maintaining the newly synthesized protein in an open conformation. Functions as a peptidyl-prolyl cis-trans isomerase. This chain is Trigger factor, found in Alcanivorax borkumensis (strain ATCC 700651 / DSM 11573 / NCIMB 13689 / SK2).